A 269-amino-acid chain; its full sequence is Hydroxypyruvate/pyruvate aldolase (269 aa).

Catalysis depends on histidine 47, which acts as the Proton acceptor. Residues glutamate 151 and aspartate 177 each coordinate a divalent metal cation.

This sequence belongs to the HpcH/HpaI aldolase family. The cofactor is a divalent metal cation.

It catalyses the reaction D-glyceraldehyde + 3-hydroxypyruvate = 2-dehydro-D-gluconate. The enzyme catalyses D-glyceraldehyde + 3-hydroxypyruvate = (3R,4S,5R)-3,4,5,6-tetrahydroxy-2-oxohexanoate. It carries out the reaction D-glyceraldehyde + 3-hydroxypyruvate = 2-dehydro-D-galactonate. The catalysed reaction is D-glyceraldehyde + pyruvate = 2-dehydro-3-deoxy-L-galactonate. It catalyses the reaction 2-dehydro-3-deoxy-D-gluconate = D-glyceraldehyde + pyruvate. Functionally, aldolase which can catalyze in vitro the aldolisation reaction between hydroxypyruvate (HPA) or pyruvate (PA) and D-glyceraldehyde (D-GA). The condensation of hydroxypyruvate and D-glyceraldehyde produces 2-dehydro-D-gluconate as the major product, (3R,4S,5R)-3,4,5,6-tetrahydroxy-2-oxohexanoate and 2-dehydro-D-galactonate. The condensation of pyruvate and D-glyceraldehyde produces 2-dehydro-3-deoxy-L-galactonate as the major product and 2-dehydro-3-deoxy-D-gluconate. The sequence is that of Hydroxypyruvate/pyruvate aldolase from Cupriavidus necator (strain ATCC 17699 / DSM 428 / KCTC 22496 / NCIMB 10442 / H16 / Stanier 337) (Ralstonia eutropha).